Here is a 412-residue protein sequence, read N- to C-terminus: uncharacterized protein (412 aa).

Disordered stretches follow at residues Asn150–Asp171, Gln177–Gln196, and Gln302–Pro412. The segment covering Gln156–Gln168 has biased composition (low complexity). 2 stretches are compositionally biased toward polar residues: residues Gln177–Ser187 and Met310–Ile321. Over residues Gly335–Asn345 the composition is skewed to low complexity. Residues Val350–Leu363 are compositionally biased toward polar residues. Composition is skewed to low complexity over residues Pro364–Pro373 and Thr381–Pro394.

This is an uncharacterized protein from Dictyostelium discoideum (Social amoeba).